We begin with the raw amino-acid sequence, 322 residues long: ATP-dependent 6-phosphofructokinase (322 aa).

G11 is a binding site for ATP. Residue 21–25 (RAVAR) participates in ADP binding. ATP-binding positions include 72 to 73 (RY) and 102 to 105 (GDGS). Residue D103 coordinates Mg(2+). A substrate-binding site is contributed by 125 to 127 (TID). D127 serves as the catalytic Proton acceptor. R154 is an ADP binding site. Residues R162 and 169–171 (MGR) each bind substrate. ADP-binding positions include 185–187 (GAD) and 213–215 (KDY). Residues E222, R246, and 252–255 (HVQR) contribute to the substrate site.

It belongs to the phosphofructokinase type A (PFKA) family. ATP-dependent PFK group I subfamily. Prokaryotic clade 'B1' sub-subfamily. As to quaternary structure, homotetramer. The cofactor is Mg(2+).

Its subcellular location is the cytoplasm. It carries out the reaction beta-D-fructose 6-phosphate + ATP = beta-D-fructose 1,6-bisphosphate + ADP + H(+). It functions in the pathway carbohydrate degradation; glycolysis; D-glyceraldehyde 3-phosphate and glycerone phosphate from D-glucose: step 3/4. Its activity is regulated as follows. Allosterically activated by ADP and other diphosphonucleosides, and allosterically inhibited by phosphoenolpyruvate. Its function is as follows. Catalyzes the phosphorylation of D-fructose 6-phosphate to fructose 1,6-bisphosphate by ATP, the first committing step of glycolysis. This chain is ATP-dependent 6-phosphofructokinase, found in Pediococcus pentosaceus (strain ATCC 25745 / CCUG 21536 / LMG 10740 / 183-1w).